The primary structure comprises 155 residues: Small ribosomal subunit protein bS6 (155 aa).

Positions Glu-94–Glu-155 are disordered. Residues Arg-107–Asn-149 show a composition bias toward basic and acidic residues.

The protein belongs to the bacterial ribosomal protein bS6 family.

Functionally, binds together with bS18 to 16S ribosomal RNA. This is Small ribosomal subunit protein bS6 from Parvibaculum lavamentivorans (strain DS-1 / DSM 13023 / NCIMB 13966).